Consider the following 197-residue polypeptide: Recombination protein RecR (197 aa).

Residues 57–72 (CSICFAITEDDPCAIC) form a C4-type zinc finger. One can recognise a Toprim domain in the interval 79 to 174 (GTICVVENSQ…RISRLAHGIP (96 aa)).

The protein belongs to the RecR family.

Functionally, may play a role in DNA repair. It seems to be involved in an RecBC-independent recombinational process of DNA repair. It may act with RecF and RecO. The sequence is that of Recombination protein RecR from Pelobacter propionicus (strain DSM 2379 / NBRC 103807 / OttBd1).